Reading from the N-terminus, the 204-residue chain is Putative AgrB-like protein (204 aa).

Helical transmembrane passes span 40 to 60 (IILI…ATGL), 87 to 107 (LNCT…FQNI), 111 to 131 (NWIV…FAPA), and 156 to 176 (LILT…LIMV).

The protein belongs to the AgrB family.

The protein resides in the cell membrane. Functionally, may be involved in the proteolytic processing of a quorum sensing system signal molecule precursor. This is Putative AgrB-like protein from Listeria welshimeri serovar 6b (strain ATCC 35897 / DSM 20650 / CCUG 15529 / CIP 8149 / NCTC 11857 / SLCC 5334 / V8).